The following is a 429-amino-acid chain: Phosphomethylpyrimidine synthase (429 aa).

Substrate is bound by residues Asn-66, Met-94, Tyr-123, His-162, 184 to 186 (SRG), 225 to 228 (DALR), and Glu-264. His-268 contacts Zn(2+). Tyr-291 is a substrate binding site. His-332 contributes to the Zn(2+) binding site. Residues Cys-408, Cys-411, and Cys-415 each coordinate [4Fe-4S] cluster.

It belongs to the ThiC family. [4Fe-4S] cluster is required as a cofactor.

The enzyme catalyses 5-amino-1-(5-phospho-beta-D-ribosyl)imidazole + S-adenosyl-L-methionine = 4-amino-2-methyl-5-(phosphooxymethyl)pyrimidine + CO + 5'-deoxyadenosine + formate + L-methionine + 3 H(+). Its pathway is cofactor biosynthesis; thiamine diphosphate biosynthesis. Its function is as follows. Catalyzes the synthesis of the hydroxymethylpyrimidine phosphate (HMP-P) moiety of thiamine from aminoimidazole ribotide (AIR) in a radical S-adenosyl-L-methionine (SAM)-dependent reaction. The polypeptide is Phosphomethylpyrimidine synthase (Sulfurisphaera tokodaii (strain DSM 16993 / JCM 10545 / NBRC 100140 / 7) (Sulfolobus tokodaii)).